Consider the following 879-residue polypeptide: Leucine--tRNA ligase (879 aa).

Positions 45-55 (PYPSGALHMGH) match the 'HIGH' region motif. The 'KMSKS' region motif lies at 637–641 (KMSKS). Residue lysine 640 participates in ATP binding.

The protein belongs to the class-I aminoacyl-tRNA synthetase family.

Its subcellular location is the cytoplasm. It carries out the reaction tRNA(Leu) + L-leucine + ATP = L-leucyl-tRNA(Leu) + AMP + diphosphate. This chain is Leucine--tRNA ligase, found in Xylella fastidiosa (strain 9a5c).